Reading from the N-terminus, the 344-residue chain is Protein pelota homolog (344 aa).

It belongs to the eukaryotic release factor 1 family. Pelota subfamily. Monomer. It depends on a divalent metal cation as a cofactor.

The protein resides in the cytoplasm. May function in recognizing stalled ribosomes, interact with stem-loop structures in stalled mRNA molecules, and effect endonucleolytic cleavage of the mRNA. May play a role in the release non-functional ribosomes and degradation of damaged mRNAs. Has endoribonuclease activity. In Saccharolobus islandicus (strain M.16.27) (Sulfolobus islandicus), this protein is Protein pelota homolog.